The primary structure comprises 191 residues: MDIQPITTYTGKVVPLFNDNIDTDQIIPKVHLKRITKSGFGPFAFDEWRYLPDGTNNPDFNPNKPEFSGATILITGDNFGCGSSREHAAWALKDYGFNIIIAGSFSDIFFMNCTKNGMLPITLGENERKYLASQKEITIDLPNQTVSANDKSFNFQIDETWKHKLVNGLDDIAITLEYEDLIEQYENKNKG.

This sequence belongs to the LeuD family. LeuD type 1 subfamily. In terms of assembly, heterodimer of LeuC and LeuD.

It catalyses the reaction (2R,3S)-3-isopropylmalate = (2S)-2-isopropylmalate. The protein operates within amino-acid biosynthesis; L-leucine biosynthesis; L-leucine from 3-methyl-2-oxobutanoate: step 2/4. Catalyzes the isomerization between 2-isopropylmalate and 3-isopropylmalate, via the formation of 2-isopropylmaleate. The sequence is that of 3-isopropylmalate dehydratase small subunit from Staphylococcus haemolyticus (strain JCSC1435).